Here is an 84-residue protein sequence, read N- to C-terminus: Putative membrane protein insertion efficiency factor (84 aa).

The protein belongs to the UPF0161 family.

The protein localises to the cell inner membrane. Functionally, could be involved in insertion of integral membrane proteins into the membrane. The chain is Putative membrane protein insertion efficiency factor from Shewanella amazonensis (strain ATCC BAA-1098 / SB2B).